A 222-amino-acid polypeptide reads, in one-letter code: UPF0758 protein Lcho_0695 (222 aa).

In terms of domain architecture, MPN spans 100–222; the sequence is VFDSPQAVRD…VVSFAERGLL (123 aa). Zn(2+) contacts are provided by His171, His173, and Asp184. The JAMM motif motif lies at 171-184; it reads HNHPSGVAEPSRAD.

This sequence belongs to the UPF0758 family.

In Leptothrix cholodnii (strain ATCC 51168 / LMG 8142 / SP-6) (Leptothrix discophora (strain SP-6)), this protein is UPF0758 protein Lcho_0695.